Consider the following 299-residue polypeptide: Porphobilinogen deaminase (299 aa).

Cysteine 242 bears the S-(dipyrrolylmethanemethyl)cysteine mark.

The protein belongs to the HMBS family. As to quaternary structure, monomer. It depends on dipyrromethane as a cofactor.

The enzyme catalyses 4 porphobilinogen + H2O = hydroxymethylbilane + 4 NH4(+). Its pathway is porphyrin-containing compound metabolism; protoporphyrin-IX biosynthesis; coproporphyrinogen-III from 5-aminolevulinate: step 2/4. Functionally, tetrapolymerization of the monopyrrole PBG into the hydroxymethylbilane pre-uroporphyrinogen in several discrete steps. This is Porphobilinogen deaminase (hemC) from Rickettsia prowazekii (strain Madrid E).